The primary structure comprises 246 residues: UDP-2,3-diacylglucosamine hydrolase (246 aa).

Mn(2+) contacts are provided by D8, H10, D41, N79, and H114. 79-80 (NR) is a binding site for substrate. Substrate contacts are provided by D122, S160, K164, K167, and H195. Residues H195 and H197 each contribute to the Mn(2+) site.

This sequence belongs to the LpxH family. It depends on Mn(2+) as a cofactor.

The protein resides in the cell inner membrane. It catalyses the reaction UDP-2-N,3-O-bis[(3R)-3-hydroxytetradecanoyl]-alpha-D-glucosamine + H2O = 2-N,3-O-bis[(3R)-3-hydroxytetradecanoyl]-alpha-D-glucosaminyl 1-phosphate + UMP + 2 H(+). It functions in the pathway glycolipid biosynthesis; lipid IV(A) biosynthesis; lipid IV(A) from (3R)-3-hydroxytetradecanoyl-[acyl-carrier-protein] and UDP-N-acetyl-alpha-D-glucosamine: step 4/6. Its function is as follows. Hydrolyzes the pyrophosphate bond of UDP-2,3-diacylglucosamine to yield 2,3-diacylglucosamine 1-phosphate (lipid X) and UMP by catalyzing the attack of water at the alpha-P atom. Involved in the biosynthesis of lipid A, a phosphorylated glycolipid that anchors the lipopolysaccharide to the outer membrane of the cell. The chain is UDP-2,3-diacylglucosamine hydrolase from Tolumonas auensis (strain DSM 9187 / NBRC 110442 / TA 4).